The primary structure comprises 161 residues: Protein-export protein SecB (161 aa).

The protein belongs to the SecB family. Homotetramer, a dimer of dimers. One homotetramer interacts with 1 SecA dimer.

The protein resides in the cytoplasm. Its function is as follows. One of the proteins required for the normal export of preproteins out of the cell cytoplasm. It is a molecular chaperone that binds to a subset of precursor proteins, maintaining them in a translocation-competent state. It also specifically binds to its receptor SecA. The protein is Protein-export protein SecB of Afipia carboxidovorans (strain ATCC 49405 / DSM 1227 / KCTC 32145 / OM5) (Oligotropha carboxidovorans).